A 158-amino-acid chain; its full sequence is Transcriptional repressor NrdR (158 aa).

Residues 3–34 fold into a zinc finger; that stretch reads CPYCGYPDSKVIDSRPTDDNTSIRRRRECLKC. Residues 49 to 139 form the ATP-cone domain; it reads ILVIKKDNRR…VYRQFKDINT (91 aa).

This sequence belongs to the NrdR family. Zn(2+) is required as a cofactor.

In terms of biological role, negatively regulates transcription of bacterial ribonucleotide reductase nrd genes and operons by binding to NrdR-boxes. The protein is Transcriptional repressor NrdR of Thermoanaerobacter sp. (strain X514).